We begin with the raw amino-acid sequence, 301 residues long: Indole-3-glycerol phosphate synthase (301 aa).

Belongs to the TrpC family.

The catalysed reaction is 1-(2-carboxyphenylamino)-1-deoxy-D-ribulose 5-phosphate + H(+) = (1S,2R)-1-C-(indol-3-yl)glycerol 3-phosphate + CO2 + H2O. The protein operates within amino-acid biosynthesis; L-tryptophan biosynthesis; L-tryptophan from chorismate: step 4/5. The chain is Indole-3-glycerol phosphate synthase from Prochlorococcus marinus (strain MIT 9313).